The chain runs to 248 residues: Tryptophan synthase alpha chain (248 aa).

Active-site proton acceptor residues include Glu36 and Asp47.

It belongs to the TrpA family. As to quaternary structure, tetramer of two alpha and two beta chains.

It carries out the reaction (1S,2R)-1-C-(indol-3-yl)glycerol 3-phosphate + L-serine = D-glyceraldehyde 3-phosphate + L-tryptophan + H2O. It functions in the pathway amino-acid biosynthesis; L-tryptophan biosynthesis; L-tryptophan from chorismate: step 5/5. In terms of biological role, the alpha subunit is responsible for the aldol cleavage of indoleglycerol phosphate to indole and glyceraldehyde 3-phosphate. The polypeptide is Tryptophan synthase alpha chain (Pyrococcus abyssi (strain GE5 / Orsay)).